A 201-amino-acid polypeptide reads, in one-letter code: Recombination protein RecR (201 aa).

The C4-type zinc finger occupies 57–74 (CSICGNITATDTDPCVIC). One can recognise a Toprim domain in the interval 82–178 (STVFVVENSR…AVTRLAHGLA (97 aa)).

The protein belongs to the RecR family.

Functionally, may play a role in DNA repair. It seems to be involved in an RecBC-independent recombinational process of DNA repair. It may act with RecF and RecO. This chain is Recombination protein RecR, found in Leuconostoc mesenteroides subsp. mesenteroides (strain ATCC 8293 / DSM 20343 / BCRC 11652 / CCM 1803 / JCM 6124 / NCDO 523 / NBRC 100496 / NCIMB 8023 / NCTC 12954 / NRRL B-1118 / 37Y).